Consider the following 320-residue polypeptide: ATP-dependent 6-phosphofructokinase (320 aa).

Glycine 12 provides a ligand contact to ATP. Residue 22–26 (RGVVR) participates in ADP binding. ATP-binding positions include 73–74 (RF) and 103–106 (GDGS). Residue aspartate 104 participates in Mg(2+) binding. Residue 126 to 128 (TID) coordinates substrate. Aspartate 128 functions as the Proton acceptor in the catalytic mechanism. Arginine 155 is a binding site for ADP. Substrate is bound by residues arginine 163 and 170 to 172 (MGR). ADP-binding positions include 186–188 (GCE), lysine 212, and 214–216 (KKH). Residues glutamate 223, arginine 244, and 250–253 (HIQR) contribute to the substrate site.

The protein belongs to the phosphofructokinase type A (PFKA) family. ATP-dependent PFK group I subfamily. Prokaryotic clade 'B1' sub-subfamily. Homotetramer. It depends on Mg(2+) as a cofactor.

It is found in the cytoplasm. The catalysed reaction is beta-D-fructose 6-phosphate + ATP = beta-D-fructose 1,6-bisphosphate + ADP + H(+). Its pathway is carbohydrate degradation; glycolysis; D-glyceraldehyde 3-phosphate and glycerone phosphate from D-glucose: step 3/4. Allosterically activated by ADP and other diphosphonucleosides, and allosterically inhibited by phosphoenolpyruvate. In terms of biological role, catalyzes the phosphorylation of D-fructose 6-phosphate to fructose 1,6-bisphosphate by ATP, the first committing step of glycolysis. The protein is ATP-dependent 6-phosphofructokinase of Aliivibrio salmonicida (strain LFI1238) (Vibrio salmonicida (strain LFI1238)).